A 554-amino-acid polypeptide reads, in one-letter code: HMG box-containing protein 4 (554 aa).

2 disordered regions span residues 15–368 (GTED…AYQV) and 417–469 (HKQN…PAKV). A compositionally biased stretch (basic and acidic residues) spans 75–88 (SSDDYHADHSTDSA). Residues 95–105 (SLPSPSSSDTA) are compositionally biased toward low complexity. Polar residues predominate over residues 113 to 123 (TSPQADTSTTH). Basic and acidic residues-rich tracts occupy residues 145–154 (PHKDYHKKSG) and 217–226 (LGREEIESRS). Over residues 236–251 (YTPRSGGTPDSASSTG) the composition is skewed to polar residues. A compositionally biased stretch (basic residues) spans 268-296 (MKKKKKSKKSKKKKDKHKDEKHKKHSKSK). Residues 313–332 (LPSPPPPPATTPPTSPPSIP) are compositionally biased toward pro residues. Residues 341–357 (HTEEQSDKKKKKEDPEK) show a composition bias toward basic and acidic residues. The segment at residues 359-427 (KKKNMSAYQV…KQNKAEATTV (69 aa)) is a DNA-binding region (HMG box). Composition is skewed to low complexity over residues 433–445 (SSES…GSSS) and 454–467 (SPTS…TSPA).

In terms of assembly, interacts with nlk.2.

The protein resides in the nucleus. In terms of biological role, negatively regulates Wnt/beta-catenin signaling during development. This Xenopus laevis (African clawed frog) protein is HMG box-containing protein 4 (hmgxb4).